We begin with the raw amino-acid sequence, 255 residues long: tRNA (guanine-N(1)-)-methyltransferase (255 aa).

S-adenosyl-L-methionine-binding positions include Gly113 and 133–138; that span reads IGDYVL.

It belongs to the RNA methyltransferase TrmD family. As to quaternary structure, homodimer.

It is found in the cytoplasm. The enzyme catalyses guanosine(37) in tRNA + S-adenosyl-L-methionine = N(1)-methylguanosine(37) in tRNA + S-adenosyl-L-homocysteine + H(+). Functionally, specifically methylates guanosine-37 in various tRNAs. The sequence is that of tRNA (guanine-N(1)-)-methyltransferase from Enterobacter sp. (strain 638).